The primary structure comprises 279 residues: Proteasome subunit beta (279 aa).

Residues 1–51 (MTFDASGRLPEAFLTPGGSSFMDFLAGHAPDLLPGRRSLGTGDLSKDVPHG) constitute a propeptide, removed in mature form; by autocatalysis. Thr52 functions as the Nucleophile in the catalytic mechanism.

This sequence belongs to the peptidase T1B family. In terms of assembly, the 20S proteasome core is composed of 14 alpha and 14 beta subunits that assemble into four stacked heptameric rings, resulting in a barrel-shaped structure. The two inner rings, each composed of seven catalytic beta subunits, are sandwiched by two outer rings, each composed of seven alpha subunits. The catalytic chamber with the active sites is on the inside of the barrel. Has a gated structure, the ends of the cylinder being occluded by the N-termini of the alpha-subunits. Is capped by the proteasome-associated ATPase, ARC.

The protein localises to the cytoplasm. The enzyme catalyses Cleavage of peptide bonds with very broad specificity.. It functions in the pathway protein degradation; proteasomal Pup-dependent pathway. The formation of the proteasomal ATPase ARC-20S proteasome complex, likely via the docking of the C-termini of ARC into the intersubunit pockets in the alpha-rings, may trigger opening of the gate for substrate entry. Interconversion between the open-gate and close-gate conformations leads to a dynamic regulation of the 20S proteasome proteolysis activity. Functionally, component of the proteasome core, a large protease complex with broad specificity involved in protein degradation. The chain is Proteasome subunit beta from Kribbella flavida (strain DSM 17836 / JCM 10339 / NBRC 14399).